Here is a 97-residue protein sequence, read N- to C-terminus: Ataxin-7-like protein 3B (97 aa).

Positions 76–97 (SLPGDPGDGPQTELQRSPPEFQ) are disordered. A Phosphoserine modification is found at Ser-92.

This sequence belongs to the SGF11 family. Interacts strongly with ENY2. Interacts weakly with USP22.

The protein localises to the cytoplasm. Functionally, by binding to ENY2, interferes with the nuclear functions of the deubiquitinase (DUB) module of the SAGA complex which consists of ENY2, ATXN7, ATXN7L3 and the histone deubiquitinating component USP22. Affects USP22 DUB activity toward histones indirectly by changing the subcellular distribution of ENY2 and altering ENY2 availability for ATXN7L3 interaction. Regulates H2B monoubiquitination (H2Bub1) levels through cytoplasmic sequestration of ENY2 resulting in loss of nuclear ENY2-ATXN7L3 association which destabilizes ATXN7L3. Affects protein expression levels of ENY2 and ATXN7L3. The sequence is that of Ataxin-7-like protein 3B (Atxn7l3b) from Mus musculus (Mouse).